Reading from the N-terminus, the 602-residue chain is Elongation factor 4 (602 aa).

In terms of domain architecture, tr-type G spans 7–188 (ENIRNFSIIA…AIVELIPPPK (182 aa)). GTP-binding positions include 19–24 (DHGKST) and 135–138 (NKID).

This sequence belongs to the TRAFAC class translation factor GTPase superfamily. Classic translation factor GTPase family. LepA subfamily.

Its subcellular location is the cell inner membrane. The enzyme catalyses GTP + H2O = GDP + phosphate + H(+). Required for accurate and efficient protein synthesis under certain stress conditions. May act as a fidelity factor of the translation reaction, by catalyzing a one-codon backward translocation of tRNAs on improperly translocated ribosomes. Back-translocation proceeds from a post-translocation (POST) complex to a pre-translocation (PRE) complex, thus giving elongation factor G a second chance to translocate the tRNAs correctly. Binds to ribosomes in a GTP-dependent manner. The sequence is that of Elongation factor 4 from Chlamydia abortus (strain DSM 27085 / S26/3) (Chlamydophila abortus).